We begin with the raw amino-acid sequence, 323 residues long: Leucine-rich repeat-containing protein 46 (323 aa).

4 LRR repeats span residues 49–70 (DLET…ERLR), 71–92 (NIHS…ACIT), 93–114 (SLRF…LDLQ), and 115–135 (YLQF…DELP). Residues 146–188 (NPCTNQDGYRKMVIGALPLLLDLDKQPILERWTSDEEDKSSDE) enclose the LRRCT domain. T178 bears the Phosphothreonine mark. Phosphoserine is present on residues S179, S185, and S186. A coiled-coil region spans residues 203 to 228 (RGFFKDLEQELHQHQERRQQAALTEH). A disordered region spans residues 252-323 (DCSPAVTEEP…TKSTNKRGTK (72 aa)). A compositionally biased stretch (polar residues) spans 269–290 (ATSSTQMASSSKKQVPRNQKGS). Low complexity predominate over residues 297 to 310 (ALAATASKTSLAAA). At S303 the chain carries Phosphoserine.

It is found in the cell projection. The protein resides in the cilium. It localises to the flagellum. Its function is as follows. Required for normal spermatogenesis and male fertility. Plays an important role in sperm flagellum biogenesis. The polypeptide is Leucine-rich repeat-containing protein 46 (Lrrc46) (Rattus norvegicus (Rat)).